A 740-amino-acid polypeptide reads, in one-letter code: Inhibitor of nuclear factor kappa-B kinase subunit alpha (740 aa).

Residues 15 to 302 (WEMRERLGTG…LTLKQPRCFV (288 aa)) enclose the Protein kinase domain. Residues 21-29 (LGTGGFGNV) and K44 contribute to the ATP site. T23 is modified (phosphothreonine; by PKB/AKT1). D144 serves as the catalytic Proton acceptor. S176 bears the Phosphoserine; by MAP3K14 mark. At S180 the chain carries Phosphoserine. A leucine-zipper region spans residues 455–476 (LLRYNTNLTKMKNTLISASQQL). The tract at residues 733–738 (LDWSWL) is NEMO-binding.

Belongs to the protein kinase superfamily. Ser/Thr protein kinase family. I-kappa-B kinase subfamily. As to quaternary structure, component of the I-kappa-B-kinase (IKK) core complex consisting of CHUK, IKBKB and IKBKG; probably four alpha/CHUK-beta/IKBKB dimers are associated with four gamma/IKBKG subunits. The IKK core complex seems to associate with regulatory or adapter proteins to form a IKK-signalosome holo-complex. The IKK complex associates with TERF2IP/RAP1, leading to promote IKK-mediated phosphorylation of RELA/p65. Part of a complex composed of NCOA2, NCOA3, CHUK/IKKA, IKBKB, IKBKG and CREBBP. Part of a 70-90 kDa complex at least consisting of CHUK/IKKA, IKBKB, NFKBIA, RELA, ELP1 and MAP3K14. Directly interacts with TRPC4AP. May interact with TRAF2. Interacts with NALP2. May interact with MAVS/IPS1. Interacts with ARRB1 and ARRB2. Interacts with NLRC5; prevents CHUK phosphorylation and kinase activity. Interacts with PIAS1; this interaction induces PIAS1 phosphorylation. Interacts with ZNF268 isoform 2; the interaction is further increased in a TNF-alpha-dependent manner. Interacts with IFIT5; the interaction synergizes the recruitment of IKK to MAP3K7 and enhances IKK phosphorylation. Interacts with LRRC14. Directly interacts with DDX3X after the physiological activation of the TLR7 and TLR8 pathways; this interaction enhances CHUK autophosphorylation. Post-translationally, ubiquitinated by TRIM56 via 'Lys-63'-linked ubiquitination, promoting activation of CHUK/IKKA. In terms of processing, phosphorylated by MAP3K14/NIK, AKT and to a lesser extent by MEKK1, and dephosphorylated by PP2A. Autophosphorylated.

The protein resides in the cytoplasm. It is found in the nucleus. It carries out the reaction L-seryl-[I-kappa-B protein] + ATP = O-phospho-L-seryl-[I-kappa-B protein] + ADP + H(+). Its activity is regulated as follows. Activated when phosphorylated and inactivated when dephosphorylated. Its function is as follows. Serine kinase that plays an essential role in the NF-kappa-B signaling pathway which is activated by multiple stimuli such as inflammatory cytokines, bacterial or viral products, DNA damages or other cellular stresses. Acts as a part of the canonical IKK complex in the conventional pathway of NF-kappa-B activation and phosphorylates inhibitors of NF-kappa-B on serine residues. These modifications allow polyubiquitination of the inhibitors and subsequent degradation by the proteasome. In turn, free NF-kappa-B is translocated into the nucleus and activates the transcription of hundreds of genes involved in immune response, growth control, or protection against apoptosis. Negatively regulates the pathway by phosphorylating the scaffold protein TAXBP1 and thus promoting the assembly of the A20/TNFAIP3 ubiquitin-editing complex (composed of A20/TNFAIP3, TAX1BP1, and the E3 ligases ITCH and RNF11). Therefore, CHUK plays a key role in the negative feedback of NF-kappa-B canonical signaling to limit inflammatory gene activation. As part of the non-canonical pathway of NF-kappa-B activation, the MAP3K14-activated CHUK/IKKA homodimer phosphorylates NFKB2/p100 associated with RelB, inducing its proteolytic processing to NFKB2/p52 and the formation of NF-kappa-B RelB-p52 complexes. In turn, these complexes regulate genes encoding molecules involved in B-cell survival and lymphoid organogenesis. Also participates in the negative feedback of the non-canonical NF-kappa-B signaling pathway by phosphorylating and destabilizing MAP3K14/NIK. Within the nucleus, phosphorylates CREBBP and consequently increases both its transcriptional and histone acetyltransferase activities. Modulates chromatin accessibility at NF-kappa-B-responsive promoters by phosphorylating histones H3 at 'Ser-10' that are subsequently acetylated at 'Lys-14' by CREBBP. Additionally, phosphorylates the CREBBP-interacting protein NCOA3. Also phosphorylates FOXO3 and may regulate this pro-apoptotic transcription factor. Interacts with SASH1. Phosphorylates RIPK1 at 'Ser-25' which represses its kinase activity and consequently prevents TNF-mediated RIPK1-dependent cell death. Phosphorylates AMBRA1 following mitophagy induction, promoting AMBRA1 interaction with ATG8 family proteins and its mitophagic activity. This Bos taurus (Bovine) protein is Inhibitor of nuclear factor kappa-B kinase subunit alpha (CHUK).